The following is an 87-amino-acid chain: Small ribosomal subunit protein bS20 (87 aa).

Residues 1–20 are disordered; the sequence is MANIKSQIKRNKTNEKARLR.

This sequence belongs to the bacterial ribosomal protein bS20 family.

Binds directly to 16S ribosomal RNA. This is Small ribosomal subunit protein bS20 from Corynebacterium efficiens (strain DSM 44549 / YS-314 / AJ 12310 / JCM 11189 / NBRC 100395).